Reading from the N-terminus, the 779-residue chain is LPS-assembly protein LptD (779 aa).

The first 23 residues, 1 to 23 (MKIRYSVLSTFIISALYSQDTQA), serve as a signal peptide directing secretion.

The protein belongs to the LptD family. Component of the lipopolysaccharide transport and assembly complex. Interacts with LptE and LptA.

The protein resides in the cell outer membrane. In terms of biological role, together with LptE, is involved in the assembly of lipopolysaccharide (LPS) at the surface of the outer membrane. In Haemophilus ducreyi (strain 35000HP / ATCC 700724), this protein is LPS-assembly protein LptD.